Consider the following 401-residue polypeptide: Golgi membrane protein 1 (401 aa).

Met-1 carries the N-acetylmethionine modification. Residues 1–12 are Cytoplasmic-facing; that stretch reads MMGLGNGRRSMK. The helical; Signal-anchor for type II membrane protein transmembrane segment at 13–35 threads the bilayer; it reads SPPLVLAALVACIIVLGFNYWIA. The Lumenal portion of the chain corresponds to 36 to 401; it reads SSRSVDLQTR…DQREKRNHTL (366 aa). Residues 40-205 are a coiled coil; sequence VDLQTRIMEL…QRQQLQALSE (166 aa). A glycan (N-linked (GlcNAc...) (complex) asparagine) is linked at Asn-109. N-linked (GlcNAc...) asparagine glycosylation is present at Asn-144. The segment at 178 to 401 is disordered; sequence TKKGNEAVAS…DQREKRNHTL (224 aa). At Ser-187 the chain carries Phosphoserine. The span at 228 to 238 shows a compositional bias: polar residues; it reads LGNSKSQTPAP. 2 stretches are compositionally biased toward basic and acidic residues: residues 244-255 and 264-285; these read LDSKRQVEKEET and EPQR…DRPV. The span at 286 to 295 shows a compositional bias: gly residues; the sequence is GGRGFGGAGE. The span at 298 to 312 shows a compositional bias: polar residues; that stretch reads QTPQVQAALSVSQEN. Ser-309 is modified (phosphoserine; by FAM20C). Residues 350–360 are compositionally biased toward acidic residues; that stretch reads DYNMDENEAES. Basic and acidic residues predominate over residues 381–395; sequence EDQKRDTINLLDQRE. Asn-398 is a glycosylation site (N-linked (GlcNAc...) asparagine).

Belongs to the GOLM family. Interacts with DYM. Glycosylated. In terms of processing, phosphorylation sites are present in the extracellular medium. As to expression, widely expressed. Highly expressed in colon, prostate, trachea and stomach. Expressed at lower level in testis, muscle, lymphoid tissues, white blood cells and spleen. Predominantly expressed by cells of the epithelial lineage. Expressed at low level in normal liver. Expression significantly increases in virus (HBV, HCV) infected liver. Expression does not increase in liver disease due to non-viral causes (alcohol-induced liver disease, autoimmune hepatitis). Increased expression in hepatocytes appears to be a general feature of advanced liver disease. In liver tissue from patients with adult giant-cell hepatitis (GCH), it is strongly expressed in hepatocytes-derived syncytial giant cells. Constitutively expressed by biliary epithelial cells but not by hepatocytes.

The protein resides in the golgi apparatus. It localises to the cis-Golgi network membrane. Its function is as follows. Unknown. Cellular response protein to viral infection. This chain is Golgi membrane protein 1 (GOLM1), found in Homo sapiens (Human).